The primary structure comprises 258 residues: Small ribosomal subunit protein uS2 (258 aa).

Residues 222–258 are disordered; that stretch reads GKALRDQDEAEQVEPVSQEEKDEVVAEAMSEADFEEQ.

Belongs to the universal ribosomal protein uS2 family.

In Campylobacter fetus subsp. fetus (strain 82-40), this protein is Small ribosomal subunit protein uS2.